The following is a 514-amino-acid chain: CBL-interacting protein kinase 25 (514 aa).

The Protein kinase domain maps to 21–281 (YEFGPLVGEG…IPEIMEMRWF (261 aa)). ATP-binding positions include 27-35 (VGEGNFAKV) and Lys50. Asp149 acts as the Proton acceptor in catalysis. The tract at residues 167 to 196 (DFGLSALADMERREAHLQTVCGTPLFLAPE) is activation loop. The tract at residues 303-340 (GLDGEPELYDSDTDTIESSSSSESPTPVAGTPRGMHTS) is disordered. Residues 304-317 (LDGEPELYDSDTDT) show a composition bias toward acidic residues. The segment covering 318 to 329 (IESSSSSESPTP) has biased composition (low complexity). In terms of domain architecture, NAF spans 323–395 (SSESPTPVAG…PSFDLSGLFE (73 aa)). The tract at residues 398-427 (GERMRFVSGAPVADIIAKLQEIAGMVSFTA) is PPI.

This sequence belongs to the protein kinase superfamily. CAMK Ser/Thr protein kinase family. SNF1 subfamily. Requires Mn(2+) as cofactor.

It carries out the reaction L-seryl-[protein] + ATP = O-phospho-L-seryl-[protein] + ADP + H(+). The catalysed reaction is L-threonyl-[protein] + ATP = O-phospho-L-threonyl-[protein] + ADP + H(+). Its function is as follows. CIPK serine-threonine protein kinases interact with CBL proteins. Binding of a CBL protein to the regulatory NAF domain of CIPK protein lead to the activation of the kinase in a calcium-dependent manner. In Oryza sativa subsp. japonica (Rice), this protein is CBL-interacting protein kinase 25 (CIPK25).